The primary structure comprises 902 residues: Protein translocase subunit SecA (902 aa).

ATP-binding positions include Gln-87, 105–109 (GEGKT), and Asp-512. The segment at 851–902 (LARQQQLSHQAPVEELTQGSAAAAQEGRKVGRNDPCPCGSGKKFKHCHGKLQ) is disordered. 4 residues coordinate Zn(2+): Cys-886, Cys-888, Cys-897, and His-898. Positions 892–902 (KKFKHCHGKLQ) are enriched in basic residues.

This sequence belongs to the SecA family. As to quaternary structure, monomer and homodimer. Part of the essential Sec protein translocation apparatus which comprises SecA, SecYEG and auxiliary proteins SecDF-YajC and YidC. Zn(2+) serves as cofactor.

Its subcellular location is the cell inner membrane. It localises to the cytoplasm. The catalysed reaction is ATP + H2O + cellular proteinSide 1 = ADP + phosphate + cellular proteinSide 2.. Part of the Sec protein translocase complex. Interacts with the SecYEG preprotein conducting channel. Has a central role in coupling the hydrolysis of ATP to the transfer of proteins into and across the cell membrane, serving both as a receptor for the preprotein-SecB complex and as an ATP-driven molecular motor driving the stepwise translocation of polypeptide chains across the membrane. This Sodalis glossinidius (strain morsitans) protein is Protein translocase subunit SecA.